The following is a 263-amino-acid chain: Endonuclease 8 (263 aa).

The active-site Schiff-base intermediate with DNA is the Pro-2. Glu-3 acts as the Proton donor in catalysis. The active-site Proton donor; for beta-elimination activity is Lys-53. 3 residues coordinate DNA: Gln-70, Arg-125, and Asn-169. The FPG-type zinc-finger motif lies at 229–263; it reads KVFHRDGEPCERCGSIIEKTTLSSRPFYWCPGCQH. Arg-253 functions as the Proton donor; for delta-elimination activity in the catalytic mechanism.

The protein belongs to the FPG family. Zn(2+) is required as a cofactor.

The catalysed reaction is 2'-deoxyribonucleotide-(2'-deoxyribose 5'-phosphate)-2'-deoxyribonucleotide-DNA = a 3'-end 2'-deoxyribonucleotide-(2,3-dehydro-2,3-deoxyribose 5'-phosphate)-DNA + a 5'-end 5'-phospho-2'-deoxyribonucleoside-DNA + H(+). Functionally, involved in base excision repair of DNA damaged by oxidation or by mutagenic agents. Acts as a DNA glycosylase that recognizes and removes damaged bases. Has a preference for oxidized pyrimidines, such as thymine glycol, 5,6-dihydrouracil and 5,6-dihydrothymine. Has AP (apurinic/apyrimidinic) lyase activity and introduces nicks in the DNA strand. Cleaves the DNA backbone by beta-delta elimination to generate a single-strand break at the site of the removed base with both 3'- and 5'-phosphates. This chain is Endonuclease 8, found in Escherichia coli O9:H4 (strain HS).